Here is a 1292-residue protein sequence, read N- to C-terminus: ABC multidrug transporter MDR5 (1292 aa).

A disordered region spans residues 1–43 (MTEEPKPVTPVLRDGEAGLDTTAPTEAGSLGEEAPKKEADGIV). Helical transmembrane passes span 79–99 (ICGF…TIIF) and 128–148 (LWFV…TICF). The 290-residue stretch at 81–370 (GFFAAVASGT…IAPTLGEFTK (290 aa)) folds into the ABC transmembrane type-1 1 domain. A glycan (N-linked (GlcNAc...) asparagine) is linked at Asn-149. The next 4 membrane-spanning stretches (helical) occupy residues 202–222 (VGTC…AFTQ), 226–246 (LTLP…ITVA), 314–334 (EFFI…KLLL), and 344–364 (ILTV…IAPT). The 246-residue stretch at 405 to 650 (LELSNAVFSY…KGQYWSLVNA (246 aa)) folds into the ABC transporter 1 domain. 440–447 (GASGSGKS) is a binding site for ATP. Asn-494 carries an N-linked (GlcNAc...) asparagine glycan. A disordered region spans residues 656-691 (ASDDSSSDTDKETDTQPAEILEKHATTKSTHSKVPH). The span at 663–680 (DTDKETDTQPAEILEKHA) shows a compositional bias: basic and acidic residues. Transmembrane regions (helical) follow at residues 720-740 (HWLF…AFPA) and 768-788 (LMFF…GFFL). An ABC transmembrane type-1 2 domain is found at 725–1012 (LLGGIASVVS…IFGFTMNTTK (288 aa)). Asn-820 carries an N-linked (GlcNAc...) asparagine glycan. The next 4 membrane-spanning stretches (helical) occupy residues 844–864 (IGLI…ALVT), 866–886 (WKLA…AGFI), 949–969 (IAMI…ALAF), and 986–1006 (FFVI…IFGF). 3 N-linked (GlcNAc...) asparagine glycosylation sites follow: Asn-1009, Asn-1031, and Asn-1052. The 238-residue stretch at 1048 to 1285 (VEFRNVSFSY…KGRYFEMCKA (238 aa)) folds into the ABC transporter 2 domain. 1083–1090 (GPSGCGKT) provides a ligand contact to ATP.

Belongs to the ABC transporter superfamily. ABCB family. Multidrug resistance exporter (TC 3.A.1.201) subfamily.

It is found in the cell membrane. It catalyses the reaction itraconazole(in) + ATP + H2O = itraconazole(out) + ADP + phosphate + H(+). Functionally, pleiotropic ABC efflux transporter involved in the modulation susceptibility to itraconazole. The sequence is that of ABC multidrug transporter MDR5 from Trichophyton rubrum (strain ATCC MYA-4607 / CBS 118892) (Athlete's foot fungus).